The primary structure comprises 72 residues: Large ribosomal subunit protein uL29 (72 aa).

Belongs to the universal ribosomal protein uL29 family.

This Thermus thermophilus (strain ATCC BAA-163 / DSM 7039 / HB27) protein is Large ribosomal subunit protein uL29.